An 87-amino-acid chain; its full sequence is Cell division topological specificity factor (87 aa).

This sequence belongs to the MinE family.

In terms of biological role, prevents the cell division inhibition by proteins MinC and MinD at internal division sites while permitting inhibition at polar sites. This ensures cell division at the proper site by restricting the formation of a division septum at the midpoint of the long axis of the cell. The chain is Cell division topological specificity factor from Roseiflexus sp. (strain RS-1).